A 150-amino-acid chain; its full sequence is UPF0178 protein PputGB1_5282 (150 aa).

It belongs to the UPF0178 family.

The protein is UPF0178 protein PputGB1_5282 of Pseudomonas putida (strain GB-1).